The sequence spans 76 residues: Sec-independent protein translocase protein TatA (76 aa).

The helical transmembrane segment at 1-21 threads the bilayer; the sequence is MGGISITQLLIIVAIVVLLFG. The interval 45–76 is disordered; that stretch reads DDNKEKDAEFKSLSDDSETTAKTEKAKDKEQA.

The protein belongs to the TatA/E family. In terms of assembly, the Tat system comprises two distinct complexes: a TatABC complex, containing multiple copies of TatA, TatB and TatC subunits, and a separate TatA complex, containing only TatA subunits. Substrates initially bind to the TatABC complex, which probably triggers association of the separate TatA complex to form the active translocon.

It localises to the cell inner membrane. Functionally, part of the twin-arginine translocation (Tat) system that transports large folded proteins containing a characteristic twin-arginine motif in their signal peptide across membranes. TatA could form the protein-conducting channel of the Tat system. This chain is Sec-independent protein translocase protein TatA, found in Pasteurella multocida (strain Pm70).